Here is a 393-residue protein sequence, read N- to C-terminus: Arrestin-C (393 aa).

The span at 371–386 shows a compositional bias: basic and acidic residues; sequence FARQEDGGEEKQKALA. The segment at 371 to 393 is disordered; that stretch reads FARQEDGGEEKQKALAEEGDEGS.

This sequence belongs to the arrestin family. In terms of assembly, homodimer; disulfide-linked in response to retinal illumination. Interacts with CXCR4; the interaction is dependent on the C-terminal phosphorylation of CXCR4 and modulates the calcium ion mobilization activity of CXCR4.

It is found in the photoreceptor inner segment. It localises to the cell projection. The protein localises to the cilium. Its subcellular location is the photoreceptor outer segment. In terms of biological role, may play a role in an as yet undefined retina-specific signal transduction. Could bind to photoactivated-phosphorylated red/green opsins. The sequence is that of Arrestin-C (ARR3) from Ictidomys tridecemlineatus (Thirteen-lined ground squirrel).